The sequence spans 334 residues: Probable tRNA pseudouridine synthase B (334 aa).

Residue D82 is the Nucleophile of the active site. Residues 250 to 325 (LPKVWIRDSA…IAVDVDKVFM (76 aa)) form the PUA domain.

The protein belongs to the pseudouridine synthase TruB family. Type 2 subfamily.

It carries out the reaction uridine(55) in tRNA = pseudouridine(55) in tRNA. Could be responsible for synthesis of pseudouridine from uracil-55 in the psi GC loop of transfer RNAs. The chain is Probable tRNA pseudouridine synthase B from Thermococcus onnurineus (strain NA1).